Here is a 207-residue protein sequence, read N- to C-terminus: Ribonuclease HII (207 aa).

Residues 18 to 207 (TYLSGSDEAG…PIKKISKETS (190 aa)) enclose the RNase H type-2 domain. Positions 24, 25, and 116 each coordinate a divalent metal cation.

The protein belongs to the RNase HII family. The cofactor is Mn(2+). Requires Mg(2+) as cofactor.

It is found in the cytoplasm. It catalyses the reaction Endonucleolytic cleavage to 5'-phosphomonoester.. Its function is as follows. Endonuclease that specifically degrades the RNA of RNA-DNA hybrids. This is Ribonuclease HII from Mycoplasma capricolum subsp. capricolum (strain California kid / ATCC 27343 / NCTC 10154).